A 215-amino-acid polypeptide reads, in one-letter code: Peptidyl-tRNA hydrolase (215 aa).

A tRNA-binding site is contributed by Tyr35. His40 serves as the catalytic Proton acceptor. 3 residues coordinate tRNA: Tyr86, Asn88, and Asn134.

Belongs to the PTH family. In terms of assembly, monomer.

It is found in the cytoplasm. It carries out the reaction an N-acyl-L-alpha-aminoacyl-tRNA + H2O = an N-acyl-L-amino acid + a tRNA + H(+). Functionally, hydrolyzes ribosome-free peptidyl-tRNAs (with 1 or more amino acids incorporated), which drop off the ribosome during protein synthesis, or as a result of ribosome stalling. Its function is as follows. Catalyzes the release of premature peptidyl moieties from peptidyl-tRNA molecules trapped in stalled 50S ribosomal subunits, and thus maintains levels of free tRNAs and 50S ribosomes. The protein is Peptidyl-tRNA hydrolase of Bordetella parapertussis (strain 12822 / ATCC BAA-587 / NCTC 13253).